The chain runs to 126 residues: 13 kDa ribonucleoprotein-associated protein (126 aa).

Belongs to the eukaryotic ribosomal protein eL8 family. In terms of assembly, component of the U3 snoRNP particle. Binds to the C'/D and B/C motifs in U3 snoRNA. Component of the 25S U4/U6.U5 tri-snRNP particle, a subcomplex of the spliceosome. Binds to the 5' stem-loop of U4 snRNA.

It is found in the nucleus. The protein resides in the nucleolus. Common component of the spliceosome and rRNA processing machinery. In association with the spliceosomal U4/U6.U5 tri-snRNP particle, required for splicing of pre-mRNA. In association with box C/D snoRNPs, required for processing of pre-ribosomal RNA (rRNA) and site-specific 2'-O-methylation of substrate RNAs. Essential for the accumulation and stability of U4 snRNA, U6 snRNA, and box C/D snoRNAs. This is 13 kDa ribonucleoprotein-associated protein (SNU13) from Kluyveromyces lactis (strain ATCC 8585 / CBS 2359 / DSM 70799 / NBRC 1267 / NRRL Y-1140 / WM37) (Yeast).